A 199-amino-acid polypeptide reads, in one-letter code: Inner membrane protein E199L (199 aa).

Asn131 carries N-linked (GlcNAc...) asparagine; by host glycosylation. Residues 150 to 170 (INVMNHPFLTLILIILILVII) form a helical membrane-spanning segment.

It belongs to the asfivirus E199L family. In terms of assembly, interacts with host PYCR2; this interaction results in autophagy activation.

The protein localises to the virion membrane. Its subcellular location is the host membrane. Essential for viral fusion with host endosomal membrane and core release. Not required for virus morphogenesis and egress. Induces complete autophagy through the interaction with and down-regulation of host PYCR2. This African swine fever virus (isolate Pig/Kenya/KEN-50/1950) (ASFV) protein is Inner membrane protein E199L.